Here is a 3678-residue protein sequence, read N- to C-terminus: Dystrophin (3678 aa).

The segment at 1–240 (MLWWEEVEDC…YITSLFQVLP (240 aa)) is actin-binding. Calponin-homology (CH) domains lie at 15–119 (DVQK…LHWQ) and 134–240 (TNSE…QVLP). The ANK2- and ANK-3 binding stretch occupies residues 63-72 (PKEKGSTRVH). Residues 313–333 (DSTQSPYPSQHLEAPRDKSLD) are disordered. 24 Spectrin repeats span residues 341-449 (VNLD…KLHK), 450-558 (VLMD…VLQD), 561-669 (LKWQ…QISQ), 721-830 (ELRK…WLEY), 832-936 (TNII…ELQT), 945-1047 (RYQE…KLEE), 1050-1156 (NKLR…ALKA), 1159-1265 (DKTV…TLEE), 1268-1369 (ACWH…LLEQ), 1370-1465 (SIQS…LFQK), 1470-1570 (EQRL…QLEK), 1573-1678 (KLSR…LLLE), 1681-1780 (KHME…KASI), 1781-1876 (PLKE…KALE), 1879-1981 (HQWY…TLHE), 1994-2103 (DVSY…RFDR), 2106-2210 (EKWR…RIEE), 2213-2318 (NVLS…ELEV), 2319-2416 (HLKD…LRTK), 2468-2570 (FNRA…QLNE), 2573-2679 (KDST…ALEE), 2682-2795 (RLLQ…HLEA), 2801-2923 (KRLH…RKID), and 2928-3033 (RLQE…QLHE). The segment at 1417 to 1915 (SDLTSHEISL…PEPRDERKLK (499 aa)) is interaction with SYNM. A WW domain is found at 3048-3081 (TSVQGPWERAISPNKVPYYINHETQTTCWDHPKM). The interval 3051 to 3401 (QGPWERAISP…TVLEGDNMET (351 aa)) is interaction with SYNM. The segment at 3301–3357 (KHQAKCNICKECPIIGFRYRSLKHFNYDICQSCFFSGRVAKGHKMHYPMVEYCTPTT) adopts a ZZ-type; degenerate zinc-finger fold. Residues C3306, C3309, C3330, and C3333 each contribute to the Zn(2+) site. Residues 3459-3511 (DDEHLLIQHYCQSLNQDSPLSQPRSPAQILISLESEERGELERILADLEEENR) form a binds to SNTB1 region. 3 positions are modified to phosphoserine: S3476, S3483, and S3493. Disordered regions lie at residues 3521-3547 (KQQH…QSPR) and 3596-3678 (EAKV…EDTM). Polar residues-rich tracts occupy residues 3600-3619 (NGTT…SSQP) and 3655-3665 (QLNNSFPSSRG). Residues S3605, S3606, S3610, S3616, S3617, and S3659 each carry the phosphoserine modification.

As to quaternary structure, interacts with SYNM. Interacts with the syntrophins SNTG1 and SNTG2. Interacts with KRT19. Component of the dystrophin-associated glycoprotein complex which is composed of three subcomplexes: a cytoplasmic complex comprised of DMD (or UTRN), DTNA and a number of syntrophins, such as SNTB1, SNTB2, SNTG1 and SNTG2, the transmembrane dystroglycan complex, and the sarcoglycan-sarcospan complex. Interacts with DAG1 (betaDAG1) with DMD; the interaction is inhibited by phosphorylation on the PPXY motif of DAG1. Interacts with SYNM; SNTA1 and SNTB1. Interacts with CMYA5. Directly interacts with ANK2 and ANK3; these interactions do not interfere with betaDAG1-binding and are necessary for proper localization in muscle cells. Identified in a dystroglycan complex that contains at least PRX, DRP2, UTRN, DMD and DAG1. Interacts with DTNB. Interacts with PGM5; the interaction is direct. Interacts with NOS1; localizes NOS1 to sarcolemma in muscle cells. In terms of tissue distribution, detected in quadriceps muscle and in sciatic nerve (at protein level). Expressed in the sarcolemma of the soleus muscle (at protein level). Differentially expressed during skeletal muscle, heart, and brain development. Also expressed in retina.

It localises to the cell membrane. Its subcellular location is the sarcolemma. The protein resides in the cytoplasm. It is found in the cytoskeleton. The protein localises to the postsynaptic cell membrane. Its function is as follows. Anchors the extracellular matrix to the cytoskeleton via F-actin. Ligand for dystroglycan. Component of the dystrophin-associated glycoprotein complex which accumulates at the neuromuscular junction (NMJ) and at a variety of synapses in the peripheral and central nervous systems and has a structural function in stabilizing the sarcolemma. Also implicated in signaling events and synaptic transmission. This is Dystrophin (Dmd) from Mus musculus (Mouse).